The following is a 439-amino-acid chain: Xylose isomerase (439 aa).

Catalysis depends on residues H103 and D106. Residues E234, E270, H273, D298, D309, D311, and D341 each coordinate Mg(2+).

Belongs to the xylose isomerase family. In terms of assembly, homotetramer. Mg(2+) serves as cofactor.

It is found in the cytoplasm. It catalyses the reaction alpha-D-xylose = alpha-D-xylulofuranose. The protein is Xylose isomerase of Bacteroides fragilis (strain YCH46).